Reading from the N-terminus, the 127-residue chain is Small ribosomal subunit protein eS8 (127 aa).

The disordered stretch occupies residues 1–24; it reads MKWQGKSARKPTGGRLVPARGKRK.

The protein belongs to the eukaryotic ribosomal protein eS8 family. As to quaternary structure, part of the 30S ribosomal subunit.

The protein is Small ribosomal subunit protein eS8 of Methanothrix thermoacetophila (strain DSM 6194 / JCM 14653 / NBRC 101360 / PT) (Methanosaeta thermophila).